The chain runs to 156 residues: 6,7-dimethyl-8-ribityllumazine synthase (156 aa).

5-amino-6-(D-ribitylamino)uracil-binding positions include Phe22, 56 to 58 (ALE), and 80 to 82 (AVI). Position 85 to 86 (85 to 86 (DT)) interacts with (2S)-2-hydroxy-3-oxobutyl phosphate. The active-site Proton donor is the His88. Phe113 provides a ligand contact to 5-amino-6-(D-ribitylamino)uracil. Arg127 contributes to the (2S)-2-hydroxy-3-oxobutyl phosphate binding site.

The protein belongs to the DMRL synthase family.

The catalysed reaction is (2S)-2-hydroxy-3-oxobutyl phosphate + 5-amino-6-(D-ribitylamino)uracil = 6,7-dimethyl-8-(1-D-ribityl)lumazine + phosphate + 2 H2O + H(+). The protein operates within cofactor biosynthesis; riboflavin biosynthesis; riboflavin from 2-hydroxy-3-oxobutyl phosphate and 5-amino-6-(D-ribitylamino)uracil: step 1/2. In terms of biological role, catalyzes the formation of 6,7-dimethyl-8-ribityllumazine by condensation of 5-amino-6-(D-ribitylamino)uracil with 3,4-dihydroxy-2-butanone 4-phosphate. This is the penultimate step in the biosynthesis of riboflavin. This chain is 6,7-dimethyl-8-ribityllumazine synthase, found in Leuconostoc mesenteroides subsp. mesenteroides (strain ATCC 8293 / DSM 20343 / BCRC 11652 / CCM 1803 / JCM 6124 / NCDO 523 / NBRC 100496 / NCIMB 8023 / NCTC 12954 / NRRL B-1118 / 37Y).